We begin with the raw amino-acid sequence, 329 residues long: Helicase VP6-A (329 aa).

2 disordered regions span residues 27 to 130 (INLV…TNGG) and 189 to 232 (DLRR…SEEP). Composition is skewed to basic and acidic residues over residues 36–58 (EGGKEDKTEPKEESKAEGSKDGE), 65–83 (GQKEEGGKETKDADVDRRI), and 96–109 (SGERANENANRGDG). Residue Lys-110 participates in ATP binding. Positions 110-129 (KVGGGGGDADAGVGATGTNG) are enriched in gly residues. Basic and acidic residues-rich tracts occupy residues 189 to 207 (DLRRKEKNGTHAKAVERGG) and 215 to 232 (HGDAQREGVEEEKTSEEP).

This sequence belongs to the reoviruses VP6 family. Homohexamer.

It localises to the virion. It carries out the reaction ATP + H2O = ADP + phosphate + H(+). Functionally, ATP dependent RNA helicase essential for RNA packaging and viral transcription. Possesses ss- and dsRNA-binding capacity. The protein is Helicase VP6-A (Segment-9) of Antilocapra americana (Pronghorn).